The chain runs to 524 residues: Strychnine-10-hydroxylase (524 aa).

Residues 6 to 26 (LYIHTAILGLISLFLILHFVF) form a helical membrane-spanning segment. Cys466 serves as a coordination point for heme.

Belongs to the cytochrome P450 family. It depends on heme as a cofactor.

It is found in the membrane. It catalyses the reaction strychnine + reduced [NADPH--hemoprotein reductase] + O2 = 10-hydroxystrychnine + oxidized [NADPH--hemoprotein reductase] + H2O + H(+). The protein operates within alkaloid biosynthesis. In terms of biological role, monooxygenase involved in the biosynthesis of curare monoterpene indole alkaloids (MIAs), natural products such as strychnine, a neurotoxic compound used as a pesticide to control rodents, and its pharmacologically active derivatives, including brucine, used to regulate blood pressure. Curare alkaloids act as animal glycine receptor antagonists. Catalyzes the conversion of strychnine to 10-OH strychnine. This chain is Strychnine-10-hydroxylase, found in Strychnos nux-vomica (Poison nut).